A 360-amino-acid polypeptide reads, in one-letter code: Protein NDRG2 (360 aa).

The disordered stretch occupies residues 325–360 (RTASLSSEGNRSRSRTLSQSSESGGGPPAPLAEVTC).

Belongs to the NDRG family.

The protein resides in the cytoplasm. Functionally, contributes to the regulation of the Wnt signaling pathway. Down-regulates CTNNB1-mediated transcriptional activation of target genes. May be involved in neuron differentiation. This Xenopus tropicalis (Western clawed frog) protein is Protein NDRG2.